Here is a 197-residue protein sequence, read N- to C-terminus: Peptide deformylase (197 aa).

C106 and H148 together coordinate Fe cation. The active site involves E149. Residue H152 participates in Fe cation binding.

It belongs to the polypeptide deformylase family. The cofactor is Fe(2+).

The catalysed reaction is N-terminal N-formyl-L-methionyl-[peptide] + H2O = N-terminal L-methionyl-[peptide] + formate. Its function is as follows. Removes the formyl group from the N-terminal Met of newly synthesized proteins. Requires at least a dipeptide for an efficient rate of reaction. N-terminal L-methionine is a prerequisite for activity but the enzyme has broad specificity at other positions. This chain is Peptide deformylase, found in Mycobacterium ulcerans (strain Agy99).